Here is a 1758-residue protein sequence, read N- to C-terminus: RanBP2-like and GRIP domain-containing protein 3 (1758 aa).

At Ser21 the chain carries Phosphoserine. A TPR 1 repeat occupies 60-93 (PRAHRFLGLLYELEENTEKAVECYRRSVELNPTQ). Residues 176–229 (RSTKRLKDAVARCHEAERNIALRSSLEWNSCVVQTLKEYLESLQCLESDKSDWR) adopt a coiled-coil conformation. One copy of the TPR 2 repeat lies at 584-617 (QKMGSGLNSFYDQREYIGRSVHYWKKVLPLLKII). Positions 761–805 (GPLYKNGSLRNADSEIKHSTPSPTKYSLSPSKSYKYSPKTPPRWA) are disordered. The segment covering 779-798 (STPSPTKYSLSPSKSYKYSP) has biased composition (low complexity). A coiled-coil region spans residues 805-837 (AEDQNSLLKMIRQEVKAIKEEMQELKLNSSKSA). The RanBD1 1 domain occupies 1037–1173 (HFEPVVQMPE…FEECQRLLLD (137 aa)). Disordered regions lie at residues 1216 to 1248 (VAEE…PTLE), 1307 to 1335 (AKLN…GQYF), and 1581 to 1622 (NNSE…KNLS). Polar residues predominate over residues 1236-1245 (IKPNAENTGP). Positions 1318 to 1330 (TDEESDVTQEEER) are enriched in acidic residues. One can recognise a RanBD1 2 domain in the interval 1334–1470 (YFEPVVPLPD…FDEAKTAQEK (137 aa)). Polar residues predominate over residues 1581–1594 (NNSETSSVAQSGSE). The segment covering 1595–1618 (SKVEPKKCELSKNSDIEQSSDSKV) has biased composition (basic and acidic residues). Positions 1703 to 1753 (QEVSAANVEHLKNVLLQFIFLKPGSERERLLPVINTMLQLSLEEKGKLAAV) constitute a GRIP domain.

This chain is RanBP2-like and GRIP domain-containing protein 3 (RGPD3), found in Homo sapiens (Human).